Consider the following 286-residue polypeptide: ATP synthase gamma chain (286 aa).

Belongs to the ATPase gamma chain family. F-type ATPases have 2 components, CF(1) - the catalytic core - and CF(0) - the membrane proton channel. CF(1) has five subunits: alpha(3), beta(3), gamma(1), delta(1), epsilon(1). CF(0) has three main subunits: a, b and c.

It localises to the cell inner membrane. Functionally, produces ATP from ADP in the presence of a proton gradient across the membrane. The gamma chain is believed to be important in regulating ATPase activity and the flow of protons through the CF(0) complex. This Shewanella loihica (strain ATCC BAA-1088 / PV-4) protein is ATP synthase gamma chain.